A 569-amino-acid polypeptide reads, in one-letter code: Protein THEMIS3 (569 aa).

CABIT stretches follow at residues 1–254 and 255–523; these read MEQT…ARLD and RKPR…EERS.

The protein belongs to the themis family. In terms of tissue distribution, specifically expressed in the intestine.

The sequence is that of Protein THEMIS3 (Themis3) from Mus musculus (Mouse).